Here is a 466-residue protein sequence, read N- to C-terminus: Asparagine--tRNA ligase (466 aa).

The protein belongs to the class-II aminoacyl-tRNA synthetase family. As to quaternary structure, homodimer.

The protein localises to the cytoplasm. The enzyme catalyses tRNA(Asn) + L-asparagine + ATP = L-asparaginyl-tRNA(Asn) + AMP + diphosphate + H(+). This chain is Asparagine--tRNA ligase, found in Shewanella sediminis (strain HAW-EB3).